Here is a 190-residue protein sequence, read N- to C-terminus: PBP1-interacting protein LSM12 (190 aa).

The Sm domain maps to 2 to 69 (PVCNNDSQLI…IKEVTALRDN (68 aa)). Residues 84 to 190 (PSMQAARDRS…ERVQKTLSKK (107 aa)) form the AD domain.

Belongs to the LSM12 family. Forms a complex composed of at least MKT1, PBP1, XAC1 and LSM12. Forms a complex composed of at least MKT1L, PBP1, XAC1 and LSM12. Within the complex, interacts with PBP1; the interaction is direct.

Its function is as follows. Involved in post-transcriptional regulation of gene expression. The sequence is that of PBP1-interacting protein LSM12 from Trypanosoma brucei brucei (strain 927/4 GUTat10.1).